The primary structure comprises 364 residues: UDP-N-acetylglucosamine--N-acetylmuramyl-(pentapeptide) pyrophosphoryl-undecaprenol N-acetylglucosamine transferase (364 aa).

UDP-N-acetyl-alpha-D-glucosamine-binding positions include 16–18, Asn-128, Arg-166, Ser-195, Ile-249, and Gln-294; that span reads TGG.

It belongs to the glycosyltransferase 28 family. MurG subfamily.

The protein resides in the cell inner membrane. It carries out the reaction di-trans,octa-cis-undecaprenyl diphospho-N-acetyl-alpha-D-muramoyl-L-alanyl-D-glutamyl-meso-2,6-diaminopimeloyl-D-alanyl-D-alanine + UDP-N-acetyl-alpha-D-glucosamine = di-trans,octa-cis-undecaprenyl diphospho-[N-acetyl-alpha-D-glucosaminyl-(1-&gt;4)]-N-acetyl-alpha-D-muramoyl-L-alanyl-D-glutamyl-meso-2,6-diaminopimeloyl-D-alanyl-D-alanine + UDP + H(+). It participates in cell wall biogenesis; peptidoglycan biosynthesis. In terms of biological role, cell wall formation. Catalyzes the transfer of a GlcNAc subunit on undecaprenyl-pyrophosphoryl-MurNAc-pentapeptide (lipid intermediate I) to form undecaprenyl-pyrophosphoryl-MurNAc-(pentapeptide)GlcNAc (lipid intermediate II). This is UDP-N-acetylglucosamine--N-acetylmuramyl-(pentapeptide) pyrophosphoryl-undecaprenol N-acetylglucosamine transferase from Chromohalobacter salexigens (strain ATCC BAA-138 / DSM 3043 / CIP 106854 / NCIMB 13768 / 1H11).